The primary structure comprises 405 residues: Threonine synthase (405 aa).

Lys106 bears the N6-(pyridoxal phosphate)lysine mark. Pyridoxal 5'-phosphate contacts are provided by residues Asn132, 233–237, and Thr371; that span reads GNAGN.

It belongs to the threonine synthase family. It depends on pyridoxal 5'-phosphate as a cofactor.

It catalyses the reaction O-phospho-L-homoserine + H2O = L-threonine + phosphate. Its pathway is amino-acid biosynthesis; L-threonine biosynthesis; L-threonine from L-aspartate: step 5/5. Functionally, catalyzes the gamma-elimination of phosphate from L-phosphohomoserine and the beta-addition of water to produce L-threonine. This chain is Threonine synthase (thrC), found in Methanocaldococcus jannaschii (strain ATCC 43067 / DSM 2661 / JAL-1 / JCM 10045 / NBRC 100440) (Methanococcus jannaschii).